A 398-amino-acid chain; its full sequence is Elongation factor Tu (398 aa).

A tr-type G domain is found at 10–207 (KPHVNIGTIG…TVDSYIPEPE (198 aa)). The segment at 19 to 26 (GHVDHGKT) is G1. 19–26 (GHVDHGKT) contributes to the GTP binding site. Thr-26 is a binding site for Mg(2+). The G2 stretch occupies residues 63–67 (GITIN). The interval 84 to 87 (DAPG) is G3. Residues 84–88 (DAPGH) and 139–142 (NKVD) contribute to the GTP site. Positions 139 to 142 (NKVD) are G4. The G5 stretch occupies residues 177–179 (SAL).

This sequence belongs to the TRAFAC class translation factor GTPase superfamily. Classic translation factor GTPase family. EF-Tu/EF-1A subfamily. As to quaternary structure, monomer.

It localises to the cytoplasm. The enzyme catalyses GTP + H2O = GDP + phosphate + H(+). Functionally, GTP hydrolase that promotes the GTP-dependent binding of aminoacyl-tRNA to the A-site of ribosomes during protein biosynthesis. The polypeptide is Elongation factor Tu (Streptococcus equi subsp. zooepidemicus (strain MGCS10565)).